We begin with the raw amino-acid sequence, 138 residues long: Prefoldin subunit alpha (138 aa).

It belongs to the prefoldin subunit alpha family. In terms of assembly, heterohexamer of two alpha and four beta subunits.

It is found in the cytoplasm. Its function is as follows. Molecular chaperone capable of stabilizing a range of proteins. Seems to fulfill an ATP-independent, HSP70-like function in archaeal de novo protein folding. In Methanosphaera stadtmanae (strain ATCC 43021 / DSM 3091 / JCM 11832 / MCB-3), this protein is Prefoldin subunit alpha.